A 348-amino-acid polypeptide reads, in one-letter code: Enkurin domain-containing protein 1 (348 aa).

Disordered regions lie at residues 1–65 (MCEG…RPGG), 84–195 (GGIS…PSAK), and 262–282 (AEAR…TRMP). At S93 the chain carries Phosphoserine. The segment covering 95-127 (KRKDPKDHEKENMRRIREIQRRFREQEHSREQG) has biased composition (basic and acidic residues). S138 carries the phosphoserine modification. The segment covering 139-148 (PKYDKVESRV) has biased composition (basic and acidic residues). An Enkurin domain is found at 253-345 (ERRDLWRREA…IFSRPKVFVK (93 aa)).

Interacts with alpha-tubulin. Interacts (via central region) with CCP110 (via N-terminal region); competes with CEP97 for binding to CCP110.

The protein localises to the cytoplasm. The protein resides in the cytoskeleton. It localises to the microtubule organizing center. It is found in the centrosome. Its subcellular location is the centriole. The protein localises to the cilium basal body. The protein resides in the cell projection. It localises to the cilium. It is found in the spindle. Its subcellular location is the spindle pole. The protein localises to the cilium axoneme. Its function is as follows. Microtubule-binding protein which regulates microtubule organization and stability. Promotes the stability of astral microtubules and facilitates the proper orientation of the mitotic spindle. This allows the oriented division of basal keratinocytes and contributes to epidermal stratification. Required for the assembly of both primary and motile cilia. Destabilizes the interaction between CCP110 and CEP97 by competing with CEP97 for binding to CCP110 which promotes the removal of CCP110 and CEP97 from the mother centriole and allows the initiation of ciliogenesis. This is Enkurin domain-containing protein 1 (ENKD1) from Bos taurus (Bovine).